A 353-amino-acid chain; its full sequence is O-antigen biosynthesis glycosyltransferase WclY (353 aa).

Residues S116–L136 traverse the membrane as a helical segment. UDP-binding residues include N190 and E271. Positions E263–E271 match the E(x7)E glycosyltransferase motif motif.

The protein belongs to the glycosyltransferase group 1 family. Glycosyltransferase 4 subfamily.

It localises to the membrane. The protein operates within bacterial outer membrane biogenesis; LPS O-antigen biosynthesis. Involved in the assembly of the O-repeating unit during O-antigen biosynthesis. N-acetylglucosamine transferase accountable for the alpha-D-GlcNAc-1,4-beta-D-Gal linkage within the O-antigen. The sequence is that of O-antigen biosynthesis glycosyltransferase WclY from Escherichia coli.